We begin with the raw amino-acid sequence, 1342 residues long: DNA-directed RNA polymerase subunit beta (1342 aa).

This sequence belongs to the RNA polymerase beta chain family. As to quaternary structure, the RNAP catalytic core consists of 2 alpha, 1 beta, 1 beta' and 1 omega subunit. When a sigma factor is associated with the core the holoenzyme is formed, which can initiate transcription.

It catalyses the reaction RNA(n) + a ribonucleoside 5'-triphosphate = RNA(n+1) + diphosphate. Functionally, DNA-dependent RNA polymerase catalyzes the transcription of DNA into RNA using the four ribonucleoside triphosphates as substrates. The chain is DNA-directed RNA polymerase subunit beta from Shewanella amazonensis (strain ATCC BAA-1098 / SB2B).